Here is a 225-residue protein sequence, read N- to C-terminus: Ribonuclease 3 (225 aa).

The 123-residue stretch at 7 to 129 (IPRLCRTLGY…IIGAIYLDSD (123 aa)) folds into the RNase III domain. Position 42 (Glu42) interacts with Mg(2+). The active site involves Asp46. Residues Asp115 and Glu118 each coordinate Mg(2+). Glu118 is a catalytic residue. Positions 155 to 225 (DPKTLLQEYL…AAQVLELIKK (71 aa)) constitute a DRBM domain.

The protein belongs to the ribonuclease III family. Homodimer. Requires Mg(2+) as cofactor.

Its subcellular location is the cytoplasm. It catalyses the reaction Endonucleolytic cleavage to 5'-phosphomonoester.. Functionally, digests double-stranded RNA. Involved in the processing of primary rRNA transcript to yield the immediate precursors to the large and small rRNAs (23S and 16S). Processes some mRNAs, and tRNAs when they are encoded in the rRNA operon. Processes pre-crRNA and tracrRNA of type II CRISPR loci if present in the organism. The sequence is that of Ribonuclease 3 from Shewanella pealeana (strain ATCC 700345 / ANG-SQ1).